Here is a 298-residue protein sequence, read N- to C-terminus: Multifunctional dioxygenase ausE (298 aa).

Arginine 72 and glutamine 127 together coordinate substrate. The Fe cation site is built by histidine 130 and aspartate 132. Threonine 167 is a binding site for substrate. Histidine 214 serves as a coordination point for Fe cation. Arginine 226 lines the substrate pocket.

The protein belongs to the PhyH family. Homodimer. Fe cation is required as a cofactor.

It carries out the reaction preaustinoid A1 + 2-oxoglutarate + O2 = preaustinoid A2 + succinate + CO2 + H2O. The enzyme catalyses preaustinoid A2 + 2-oxoglutarate + O2 = preaustinoid A3 + succinate + CO2 + H2O. It catalyses the reaction berkeleyone A + 2-oxoglutarate + O2 = preaustinoid A + succinate + CO2 + H2O. The protein operates within secondary metabolite biosynthesis; terpenoid biosynthesis. Its function is as follows. Multifunctional dioxygenase; part of the gene cluster B that mediates the biosynthesis of austinol and dehydroaustinol, two fungal meroterpenoids. The first step of the pathway is the synthesis of 3,5-dimethylorsellinic acid by the polyketide synthase ausA. 3,5-dimethylorsellinic acid is then prenylated by the polyprenyl transferase ausN. Further epoxidation by the FAD-dependent monooxygenase ausM and cyclization by the probable terpene cyclase ausL lead to the formation of protoaustinoid A. Protoaustinoid A is then oxidized to spiro-lactone preaustinoid A3 by the combined action of the FAD-binding monooxygenases ausB and ausC, and the dioxygenase ausE. Acid-catalyzed keto-rearrangement and ring contraction of the tetraketide portion of preaustinoid A3 by ausJ lead to the formation of preaustinoid A4. The aldo-keto reductase ausK, with the help of ausH, is involved in the next step by transforming preaustinoid A4 into isoaustinone which is in turn hydroxylated by the P450 monooxygenase ausI to form austinolide. Finally, the cytochrome P450 monooxygenase ausG modifies austinolide to austinol. Austinol can be further modified to dehydroaustinol which forms a diffusible complex with diorcinol that initiates conidiation. Due to genetic rearrangements of the clusters and the subsequent loss of some enzymes, the end products of the Emericella nidulans austinoid biosynthesis clusters are austinol and dehydroaustinol, even if additional enzymes, such as the O-acetyltransferase ausQ and the cytochrome P450 monooxygenase ausR are still functional. The chain is Multifunctional dioxygenase ausE from Emericella nidulans (strain FGSC A4 / ATCC 38163 / CBS 112.46 / NRRL 194 / M139) (Aspergillus nidulans).